Reading from the N-terminus, the 672-residue chain is MSEPKNILLTVDGELREVTHGTTGLDLFREKPTTAVMRVDGLLWDLAREIPAGASVESVDITEPEGLEVLRHSTAHVMAQAVQQLRPGAKLGIGPYITDGFYFDFDVDDPFTPEDLKQISSLMQKIVKSGQAFRRRVVDEETARAEMADEPYKLELLGKKDAADTAGEGASVEVGAGEITIYDNVDRKTGDAVWCDLCRGPHLPSTKLIGNGFALTRSAAAYWLGNEKNKQLQRIYGTAWASKDDLKAYQERLAEAERRDHRKLGAELDLFSFPDELGSGLPVFHPRGGIIRKEMEDYSRRRHTEAGYEFVYTPHITKQHLYEVSGHLDWYANGMFPPMHIDEVRDPETGEITRQGQNYYLKPMNCPMHNLIYRSRGRSYRELPLRLFEFGSVYRYEKSGVVHGLTRVRGMTQDDAHIYCTREQMKEELTTTLNFVLDLLKDYGLNDFHLELSTKDPEKFVGSDEIWEEATRTLAEVAEASGLQLVPDPGGAAFYGPKISVQARDAIGRTWQMSTIQLDFNLPERFDLEYQAADGTRQRPVMIHRALFGSIERFLGVLTEHYAGAFPAWLAPEQVVAIPVAEAFNDYLDDVVAKLRAEGIRARLDDSSDRFPKKIRTAAKEKAPFVLIAGGEDREAGAVSFRFRDGTQDNGVPVEEAIERIVKAVREREVTP.

The 59-residue stretch at Ser2–Asp60 folds into the TGS domain. A catalytic region spans residues Asp260–Pro567. Positions 366, 417, and 544 each coordinate Zn(2+).

The protein belongs to the class-II aminoacyl-tRNA synthetase family. As to quaternary structure, homodimer. The cofactor is Zn(2+).

Its subcellular location is the cytoplasm. The catalysed reaction is tRNA(Thr) + L-threonine + ATP = L-threonyl-tRNA(Thr) + AMP + diphosphate + H(+). Catalyzes the attachment of threonine to tRNA(Thr) in a two-step reaction: L-threonine is first activated by ATP to form Thr-AMP and then transferred to the acceptor end of tRNA(Thr). Also edits incorrectly charged L-seryl-tRNA(Thr). The sequence is that of Threonine--tRNA ligase from Micrococcus luteus (strain ATCC 4698 / DSM 20030 / JCM 1464 / CCM 169 / CCUG 5858 / IAM 1056 / NBRC 3333 / NCIMB 9278 / NCTC 2665 / VKM Ac-2230) (Micrococcus lysodeikticus).